The sequence spans 381 residues: tRNA-cytidine(32) 2-sulfurtransferase (381 aa).

Residues 101 to 106 carry the PP-loop motif motif; that stretch reads SGGKDS. [4Fe-4S] cluster contacts are provided by Cys-176, Cys-179, and Cys-267.

The protein belongs to the TtcA family. As to quaternary structure, homodimer. Mg(2+) is required as a cofactor. It depends on [4Fe-4S] cluster as a cofactor.

The protein localises to the cytoplasm. It catalyses the reaction cytidine(32) in tRNA + S-sulfanyl-L-cysteinyl-[cysteine desulfurase] + AH2 + ATP = 2-thiocytidine(32) in tRNA + L-cysteinyl-[cysteine desulfurase] + A + AMP + diphosphate + H(+). It functions in the pathway tRNA modification. In terms of biological role, catalyzes the ATP-dependent 2-thiolation of cytidine in position 32 of tRNA, to form 2-thiocytidine (s(2)C32). The sulfur atoms are provided by the cysteine/cysteine desulfurase (IscS) system. This chain is tRNA-cytidine(32) 2-sulfurtransferase, found in Psychrobacter cryohalolentis (strain ATCC BAA-1226 / DSM 17306 / VKM B-2378 / K5).